The sequence spans 271 residues: 1,4-dihydroxy-2-naphthoyl-CoA synthase (271 aa).

Residues 71–75, Y83, 115–119, T141, S147, Y244, and K259 each bind substrate; these read SGGDQ and YAIGG. 140–142 contributes to the hydrogencarbonate binding site; the sequence is QTG. A compositionally biased stretch (basic and acidic residues) spans 250-263; the sequence is KEGRDSFKEKRKPD. The segment at 250–271 is disordered; it reads KEGRDSFKEKRKPDFGQFPRFP.

Belongs to the enoyl-CoA hydratase/isomerase family. MenB subfamily. Hydrogencarbonate is required as a cofactor.

The catalysed reaction is 2-succinylbenzoyl-CoA + H(+) = 1,4-dihydroxy-2-naphthoyl-CoA + H2O. The protein operates within quinol/quinone metabolism; 1,4-dihydroxy-2-naphthoate biosynthesis; 1,4-dihydroxy-2-naphthoate from chorismate: step 6/7. It functions in the pathway quinol/quinone metabolism; menaquinone biosynthesis. Its function is as follows. Converts o-succinylbenzoyl-CoA (OSB-CoA) to 1,4-dihydroxy-2-naphthoyl-CoA (DHNA-CoA). This Bacillus subtilis (strain 168) protein is 1,4-dihydroxy-2-naphthoyl-CoA synthase.